Consider the following 330-residue polypeptide: DNA-directed RNA polymerase subunit alpha (330 aa).

Residues 1-236 (MQGSVTEFLK…EQLDAFVDLR (236 aa)) form an alpha N-terminal domain (alpha-NTD) region. The interval 250 to 330 (FDPILLRPVD…NWPPASIAED (81 aa)) is alpha C-terminal domain (alpha-CTD).

The protein belongs to the RNA polymerase alpha chain family. As to quaternary structure, homodimer. The RNAP catalytic core consists of 2 alpha, 1 beta, 1 beta' and 1 omega subunit. When a sigma factor is associated with the core the holoenzyme is formed, which can initiate transcription.

It catalyses the reaction RNA(n) + a ribonucleoside 5'-triphosphate = RNA(n+1) + diphosphate. Functionally, DNA-dependent RNA polymerase catalyzes the transcription of DNA into RNA using the four ribonucleoside triphosphates as substrates. This is DNA-directed RNA polymerase subunit alpha from Vibrio atlanticus (strain LGP32) (Vibrio splendidus (strain Mel32)).